Consider the following 211-residue polypeptide: Arginine exporter protein ArgO (211 aa).

A run of 6 helical transmembrane segments spans residues 1–21 (MISY…PLGP), 37–57 (LMIA…GIFG), 68–88 (LLAL…LGAL), 111–131 (IIAT…DTFV), 147–167 (WFAL…ALLA), and 179–199 (AQRI…FQLA).

The protein belongs to the LysE/ArgO transporter (TC 2.A.75) family.

It localises to the cell inner membrane. It catalyses the reaction L-arginine(in) = L-arginine(out). Its function is as follows. Involved in the export of arginine. Important to control the intracellular level of arginine and the correct balance between arginine and lysine. In Salmonella enteritidis PT4 (strain P125109), this protein is Arginine exporter protein ArgO.